A 248-amino-acid chain; its full sequence is 2,3-dihydro-2,3-dihydroxybenzoate dehydrogenase (248 aa).

9–33 (WVTGAGKGIGYATALAFVEAGAKVT) is a binding site for NAD(+). Serine 131 provides a ligand contact to substrate. The active-site Proton acceptor is tyrosine 144.

This sequence belongs to the short-chain dehydrogenases/reductases (SDR) family. Homotetramer; dimer of dimers. EntA and EntE interact together.

The catalysed reaction is (2S,3S)-2,3-dihydroxy-2,3-dihydrobenzoate + NAD(+) = 2,3-dihydroxybenzoate + NADH + H(+). The protein operates within siderophore biosynthesis; enterobactin biosynthesis. With respect to regulation, inhibited by cis-2-hydroxy-3-cyclohexen-1-carboxylate, cis-2-hydroxycyclohexane-1-carboxylate and trans-2-hydroxycyclohexane-1-carboxylate. Its function is as follows. Involved in the biosynthesis of the siderophore enterobactin (enterochelin), which is a macrocyclic trimeric lactone of N-(2,3-dihydroxybenzoyl)-serine. Catalyzes the reversible NAD-dependent oxidation of the C3-hydroxyl group of 2,3-dihydro-2,3-dihydroxybenzoate (2,3-diDHB), producing the transient intermediate 2-hydroxy-3-oxo-4,6-cyclohexadiene-1-carboxylate, which undergoes rapid aromatization to the final product, 2,3-dihydroxybenzoate (2,3-DHB). Only the compounds with a C3-hydroxyl group such as methyl 2,3-dihydro-2,3-dihydroxybenzoate, methyl-3-hydroxy-1,4-cyclohexadiene-1-carboxylate, trans-3-hydroxy-2-cyclohexene-1-carboxylate, cis-3-hydroxy-4-cyclohexene-1-carboxylate, cis-3-hydroxycyclohexane-1-carboxylic acid are oxidized to the corresponding ketone products. The stereospecificity of the C3 allylic alcohol group oxidation is 3R in a 1R,3R dihydro substrate. It can also increase the DHB-AMP ligase activity of EntE by interaction EntE. The sequence is that of 2,3-dihydro-2,3-dihydroxybenzoate dehydrogenase from Escherichia coli (strain K12).